The primary structure comprises 347 residues: Putative ORC1-type DNA replication protein 1 (347 aa).

ATP is bound by residues 34 to 38, Tyr-167, and Arg-179; that span reads TGKTV.

Belongs to the CDC6/cdc18 family.

Its function is as follows. Involved in regulation of DNA replication. Has no effect on MCM helicase activity, either stimulatory or inhibitory. Does not bind DNA. The sequence is that of Putative ORC1-type DNA replication protein 1 (cdc6-1) from Thermoplasma acidophilum (strain ATCC 25905 / DSM 1728 / JCM 9062 / NBRC 15155 / AMRC-C165).